Here is a 449-residue protein sequence, read N- to C-terminus: Tubulin alpha chain (449 aa).

An MREC motif motif is present at residues 1–4; the sequence is MREC. Residue glutamine 11 participates in GTP binding. At lysine 40 the chain carries N6-acetyllysine. GTP is bound by residues glutamate 71, serine 140, glycine 144, threonine 145, threonine 179, asparagine 206, and asparagine 228. Glutamate 71 serves as a coordination point for Mg(2+). The active site involves glutamate 254. The tract at residues 430 to 449 is disordered; sequence KDYEEVGADSADAEDEGEEY. Acidic residues predominate over residues 431–449; that stretch reads DYEEVGADSADAEDEGEEY.

It belongs to the tubulin family. Dimer of alpha and beta chains. A typical microtubule is a hollow water-filled tube with an outer diameter of 25 nm and an inner diameter of 15 nM. Alpha-beta heterodimers associate head-to-tail to form protofilaments running lengthwise along the microtubule wall with the beta-tubulin subunit facing the microtubule plus end conferring a structural polarity. Microtubules usually have 13 protofilaments but different protofilament numbers can be found in some organisms and specialized cells. Mg(2+) serves as cofactor. Post-translationally, some glutamate residues at the C-terminus are polyglycylated, resulting in polyglycine chains on the gamma-carboxyl group. Glycylation is mainly limited to tubulin incorporated into axonemes (cilia and flagella) whereas glutamylation is prevalent in neuronal cells, centrioles, axonemes, and the mitotic spindle. Both modifications can coexist on the same protein on adjacent residues, and lowering polyglycylation levels increases polyglutamylation, and reciprocally. The precise function of polyglycylation is still unclear. Some glutamate residues at the C-terminus are polyglutamylated, resulting in polyglutamate chains on the gamma-carboxyl group. Polyglutamylation plays a key role in microtubule severing by spastin (SPAST). SPAST preferentially recognizes and acts on microtubules decorated with short polyglutamate tails: severing activity by SPAST increases as the number of glutamates per tubulin rises from one to eight, but decreases beyond this glutamylation threshold. In terms of processing, acetylation of alpha chains at Lys-40 is located inside the microtubule lumen. This modification has been correlated with increased microtubule stability, intracellular transport and ciliary assembly. Post-translationally, undergoes a tyrosination/detyrosination cycle, the cyclic removal and re-addition of a C-terminal tyrosine residue by the enzymes tubulin tyrosine carboxypeptidase (MATCAP1, VASH1 or VASH2) and tubulin tyrosine ligase (TTL), respectively. Tyrosination promotes microtubule interaction with CAP-Gly microtubule plus-end tracking proteins. Tyrosinated tubulins regulate the initiation of dynein-driven motility. In terms of processing, detyrosination is involved in metaphase plate congression by guiding chromosomes during mitosis. Detyrosination increases microtubules-dependent mechanotransduction in dystrophic cardiac and skeletal muscle. In cardiomyocytes, detyrosinated microtubules are required to resist to contractile compression during contraction.

The protein resides in the cytoplasm. It is found in the cytoskeleton. It catalyses the reaction GTP + H2O = GDP + phosphate + H(+). Functionally, tubulin is the major constituent of microtubules, a cylinder consisting of laterally associated linear protofilaments composed of alpha- and beta-tubulin heterodimers. Microtubules grow by the addition of GTP-tubulin dimers to the microtubule end, where a stabilizing cap forms. Below the cap, tubulin dimers are in GDP-bound state, owing to GTPase activity of alpha-tubulin. The polypeptide is Tubulin alpha chain (tuba) (Xenopus laevis (African clawed frog)).